Reading from the N-terminus, the 217-residue chain is Kunitz-type trypsin inhibitor-like 1 protein (217 aa).

The N-terminal stretch at 1-26 (MKPLSPLTLSFFLFVFITNLSLAFSN) is a signal peptide. Intrachain disulfides connect Cys-70–Cys-115 and Cys-168–Cys-175. An N-linked (GlcNAc...) asparagine glycan is attached at Asn-191.

Belongs to the protease inhibitor I3 (leguminous Kunitz-type inhibitor) family. Expressed in roots, leaves, epidermal layers of elongating stems, meristems and in the vascular system.

Its subcellular location is the secreted. Functionally, might act as a protease inhibitor involved in plant defense responses. The polypeptide is Kunitz-type trypsin inhibitor-like 1 protein (PIP20-1) (Pisum sativum (Garden pea)).